We begin with the raw amino-acid sequence, 157 residues long: SsrA-binding protein (157 aa).

Belongs to the SmpB family.

Its subcellular location is the cytoplasm. Its function is as follows. Required for rescue of stalled ribosomes mediated by trans-translation. Binds to transfer-messenger RNA (tmRNA), required for stable association of tmRNA with ribosomes. tmRNA and SmpB together mimic tRNA shape, replacing the anticodon stem-loop with SmpB. tmRNA is encoded by the ssrA gene; the 2 termini fold to resemble tRNA(Ala) and it encodes a 'tag peptide', a short internal open reading frame. During trans-translation Ala-aminoacylated tmRNA acts like a tRNA, entering the A-site of stalled ribosomes, displacing the stalled mRNA. The ribosome then switches to translate the ORF on the tmRNA; the nascent peptide is terminated with the 'tag peptide' encoded by the tmRNA and targeted for degradation. The ribosome is freed to recommence translation, which seems to be the essential function of trans-translation. This chain is SsrA-binding protein, found in Clostridium kluyveri (strain NBRC 12016).